The chain runs to 309 residues: MRRAALWLWLCALALRLQPVLPQIMAVNVPPEDQDGSGDDSDNFSGSGTGALPDITLSRQTSSTLKDVWLLTATPTAPEPTSRDTEATFTSILPAGEKPGEGEPVLIAEVDTSSTTWDKELEVTTRPRETTQLLVTHRVSTARATTAQAPVTSHPHRDVQPGLHETLAPTAPGQPDHQPPSGGTSVIKEVAEDGATNQLPTGEGSGEQDFTFETSGENTAVAAIEPDQRNQPPVDEGATGASQGLLDRKEVLGGVIAGGLVGLIFAVCLVGFMLYRMKKKDEGSYSLEEPKQANGGAYQKPTKQEEFYA.

Positions 1–22 (MRRAALWLWLCALALRLQPVLP) are cleaved as a signal peptide. The Extracellular segment spans residues 24–253 (IMAVNVPPED…GLLDRKEVLG (230 aa)). Disordered regions lie at residues 28–57 (NVPP…DITL) and 142–185 (ARAT…GGTS). Over residues 32–42 (EDQDGSGDDSD) the composition is skewed to acidic residues. Ser37 carries an O-linked (Xyl...) (chondroitin sulfate) serine glycan. Asn43 carries N-linked (GlcNAc...) asparagine glycosylation. O-linked (Xyl...) (heparan sulfate) serine glycans are attached at residues Ser45 and Ser47. Residues 142 to 151 (ARATTAQAPV) show a composition bias toward polar residues. O-linked (Xyl...) (chondroitin sulfate) serine glycosylation is found at Ser205 and Ser215. The chain crosses the membrane as a helical span at residues 254 to 274 (GVIAGGLVGLIFAVCLVGFML). At 275–309 (YRMKKKDEGSYSLEEPKQANGGAYQKPTKQEEFYA) the chain is on the cytoplasmic side. Residues 283–309 (GSYSLEEPKQANGGAYQKPTKQEEFYA) form a disordered region. Ser284 is modified (phosphoserine).

Belongs to the syndecan proteoglycan family. Interacts with CDCP1. Interacts (via C-terminus) with TIAM1 (via PDZ domain). Interacts with MDK. In terms of processing, shedding is enhanced by a number of factors such as heparanase, thrombin or EGF. Also by stress and wound healing. PMA-mediated shedding is inhibited by TIMP3.

It is found in the membrane. Its subcellular location is the secreted. The protein localises to the extracellular exosome. In terms of biological role, cell surface proteoglycan that contains both heparan sulfate and chondroitin sulfate and that links the cytoskeleton to the interstitial matrix. Regulates exosome biogenesis in concert with SDCBP and PDCD6IP. Able to induce its own expression in dental mesenchymal cells and also in the neighboring dental epithelial cells via an MSX1-mediated pathway. The protein is Syndecan-1 of Cricetulus griseus (Chinese hamster).